We begin with the raw amino-acid sequence, 279 residues long: Thymidylate synthase (279 aa).

141–142 (RR) is a binding site for dUMP. Cys161 (nucleophile) is an active-site residue. DUMP contacts are provided by residues 181–184 (RSND), Asn192, and 222–224 (HVY). Asp184 provides a ligand contact to (6R)-5,10-methylene-5,6,7,8-tetrahydrofolate. Residue Ala278 participates in (6R)-5,10-methylene-5,6,7,8-tetrahydrofolate binding.

The protein belongs to the thymidylate synthase family. Homodimer.

The catalysed reaction is dUMP + (6R)-5,10-methylene-5,6,7,8-tetrahydrofolate = 7,8-dihydrofolate + dTMP. The protein operates within pyrimidine metabolism; dTTP biosynthesis. Provides the sole de novo source of dTMP for DNA biosynthesis. This chain is Thymidylate synthase (thyP3), found in Bacillus subtilis (Bacteriophage phi-3T).